A 141-amino-acid polypeptide reads, in one-letter code: MSPKIRETLYYVGTLVPGILGIALIWGGIDAGAAANIGDIVAGALNLVGAAAPATAAVKVNQQRKDGTLTTSPVDQVTRGVEQVLAAKQNAEAEVERVKQALESAVNGAVPQLGPLASQILNGIQPAYSQPFDPHTQPWNR.

Transmembrane regions (helical) follow at residues 9 to 29 and 37 to 57; these read LYYV…WGGI and IGDI…ATAA. The stretch at 74–108 forms a coiled coil; the sequence is VDQVTRGVEQVLAAKQNAEAEVERVKQALESAVNG.

It belongs to the Mycobacterium phage D29 holin family. Homomultimer. Self-associates to form a pore.

The protein localises to the host cell inner membrane. In terms of biological role, accumulates harmlessly in the cytoplasmic membrane until it reaches a critical concentration that triggers the formation of micron-scale pores (holes) causing host cell membrane disruption and endolysin escape into the periplasmic space. Determines the precise timing of host cell lysis. Participates with the endolysin protein in the sequential events which lead to the programmed host cell lysis releasing the mature viral particles from the host cell. The protein is Holin (11) of Mycobacterium (Mycobacteriophage D29).